We begin with the raw amino-acid sequence, 169 residues long: Ureidoglycolate lyase (169 aa).

It belongs to the ureidoglycolate lyase family. Homodimer. Ni(2+) is required as a cofactor.

It carries out the reaction (S)-ureidoglycolate = urea + glyoxylate. Its pathway is nitrogen metabolism; (S)-allantoin degradation. In terms of biological role, catalyzes the catabolism of the allantoin degradation intermediate (S)-ureidoglycolate, generating urea and glyoxylate. Involved in the utilization of allantoin as nitrogen source. The chain is Ureidoglycolate lyase from Brucella anthropi (strain ATCC 49188 / DSM 6882 / CCUG 24695 / JCM 21032 / LMG 3331 / NBRC 15819 / NCTC 12168 / Alc 37) (Ochrobactrum anthropi).